Reading from the N-terminus, the 641-residue chain is Sodium-dependent nutrient amino acid transporter 1 (641 aa).

A disordered region spans residues 1 to 38 (MELKGVQPSNGSSNGSGNGATNAASTEKTDAEKPTAER). Residues 1–40 (MELKGVQPSNGSSNGSGNGATNAASTEKTDAEKPTAERTN) lie on the Cytoplasmic side of the membrane. The span at 9–26 (SNGSSNGSGNGATNAAST) shows a compositional bias: low complexity. Positions 27–36 (EKTDAEKPTA) are enriched in basic and acidic residues. A run of 3 helical transmembrane segments spans residues 41-61 (WGNG…LGNV), 74-94 (GAFL…MYYL), and 111-131 (SVVP…ICII). Residues asparagine 185 and asparagine 190 are each glycosylated (N-linked (GlcNAc...) asparagine). 9 consecutive transmembrane segments (helical) span residues 229–249 (PDWK…LVIM), 258–278 (AAYF…IRAV), 307–327 (AVVQ…MFAS), 341–361 (IVTT…FAIL), 401–421 (LFSV…IVAL), 447–467 (VCGF…ILTL), 474–494 (TYVV…VYGL), 516–536 (CWSF…MVTI), and 552–572 (IAGW…GLWY).

It belongs to the sodium:neurotransmitter symporter (SNF) (TC 2.A.22) family. In terms of tissue distribution, in larvae, weak specific expression in the anterior midgut just proximal to the gastric caeca reproductive rudiments, common ureters of the Malpighian tubules, and distal swollen portion of the anterior pair of Malpighian tubules. Expression is also seen in the imaginal disks of the head; brain hemispheres and the ventral ganglion. Stronger expression in the posterior midgut.

The protein localises to the membrane. Unusual broad substrate spectrum amino acid:sodium cotransporter that promotes absorption of the D isomers of essential amino acids. Neutral amino acids are the preferred substrates, especially methionine and phenylalanine. The protein is Sodium-dependent nutrient amino acid transporter 1 (NAAT1) of Drosophila melanogaster (Fruit fly).